Here is a 400-residue protein sequence, read N- to C-terminus: Exodeoxyribonuclease 7 large subunit (400 aa).

This sequence belongs to the XseA family. Heterooligomer composed of large and small subunits.

The protein resides in the cytoplasm. The catalysed reaction is Exonucleolytic cleavage in either 5'- to 3'- or 3'- to 5'-direction to yield nucleoside 5'-phosphates.. In terms of biological role, bidirectionally degrades single-stranded DNA into large acid-insoluble oligonucleotides, which are then degraded further into small acid-soluble oligonucleotides. The sequence is that of Exodeoxyribonuclease 7 large subunit from Clostridium perfringens (strain ATCC 13124 / DSM 756 / JCM 1290 / NCIMB 6125 / NCTC 8237 / Type A).